The sequence spans 1388 residues: Retrotransposon Gag-like protein 9 (1388 aa).

Disordered regions lie at residues 491–511, 769–790, 895–918, 1100–1138, and 1336–1388; these read ATAS…GAMS, TPLM…ASSS, GGVS…RRPS, TDSG…PKEV, and AMGN…HTNK. The segment covering 1103–1123 has biased composition (polar residues); it reads GEASTSHINITASGSKPTSHM. Residues 1359 to 1374 show a composition bias toward basic and acidic residues; the sequence is YLKEHGDPQEGLHDHL.

The protein is Retrotransposon Gag-like protein 9 of Homo sapiens (Human).